The following is a 426-amino-acid chain: 4-hydroxy-3-methylbut-2-en-1-yl diphosphate synthase (flavodoxin) (426 aa).

[4Fe-4S] cluster-binding residues include cysteine 320, cysteine 323, cysteine 366, and glutamate 373.

The protein belongs to the IspG family. [4Fe-4S] cluster is required as a cofactor.

It catalyses the reaction (2E)-4-hydroxy-3-methylbut-2-enyl diphosphate + oxidized [flavodoxin] + H2O + 2 H(+) = 2-C-methyl-D-erythritol 2,4-cyclic diphosphate + reduced [flavodoxin]. It functions in the pathway isoprenoid biosynthesis; isopentenyl diphosphate biosynthesis via DXP pathway; isopentenyl diphosphate from 1-deoxy-D-xylulose 5-phosphate: step 5/6. Converts 2C-methyl-D-erythritol 2,4-cyclodiphosphate (ME-2,4cPP) into 1-hydroxy-2-methyl-2-(E)-butenyl 4-diphosphate. The chain is 4-hydroxy-3-methylbut-2-en-1-yl diphosphate synthase (flavodoxin) from Wolbachia sp. subsp. Drosophila simulans (strain wRi).